Reading from the N-terminus, the 1058-residue chain is MPKRTDIQKIMVIGSGPIIIGQAAEFDYAGTQACFSLKEEGYEVVLVNSNPATIMTDKEIADKVYIEPITLEFVTRILRKEGPDALLPTLGGQTGLNMAMELSKNGILDELGVELLGTKLSAIDQAEDRDLFKQLMEELEQPIPESEIVNTVEEAVAFAATIGYPVIVRPAFTLGGTGGGMCANEKELREITENGLKLSPVTQCLIERSIAGFKEIEYEVMRDSADNALVVCNMENFDPVGIHTGDSIVFAPAQTMSDYENQMLRDASLSIIRALKIEGGCNVQLALDPNSFKYYVIEVNPRVSRSSALASKATGYPIAKLAAKIAVGLTLDEVINPVTGSTYAMFEPALDYVVAKIPRFPFDKFEKGERRLGTQMKATGEVMAIGRNIEESLLKACRSLEIGVHHNEIPELAAVSDDALIEKVVKAQDDRLFYVSEAIRRGYTPEEIAELTKIDIFYLDKLLHIFEIEQELGAHPQDLEVLKTAKLNGFSDRKIAELWGTTDDKVRQLRLENKIVPVYKMVDTCAAEFDSETPYFYSTYGWENESIRSDKESVLVLGSGPIRIGQGVEFDYATVHSVKAIQAAGYEAIIMNSNPETVSTDFSVSDKLYFEPLTFEDVMNVIDLEQPKGVIVQFGGQTAINLAEPLAKAGVTILGTQVADLDRAEDRDLFEQALKELDIPQPPGQTATNEEEAALAARKIGFPVLVRPSYVLGGRAMEIVENEEDLRSYMRTAVKASPDHPVLVDSYIVGQECEVDAISDGKNVLIPGIMEHIERAGVHSGDSMAVYPPQTLSQKVQETIADYTKRLAIGLHCLGMMNIQFVIKDEKVYVIEVNPRASRTVPFLSKVTNIPMAQVATKLILGQSLSELGYQNGLYPESTRVHIKAPVFSFTKLAKVDSLLGPEMKSTGEVMGSDATLEKALYKAFEASYLHLPTFGNVVFTIADDAKEEALNLARRFQNIGYGILATEGTAAFFASHGLQAQPVGKIGDDDKDIPSFVRKGRIQAIINTVGTKRTADEDGEQIRRSAIEHGVPLFTALDTANAMLKVLESRSFVTEAI.

Residues 1–401 (MPKRTDIQKI…SLLKACRSLE (401 aa)) are carboxyphosphate synthetic domain. Residues Arg-129, Arg-169, Gly-175, Gly-176, Arg-208, Ile-210, Glu-215, Gly-241, Ile-242, His-243, Gln-284, and Glu-298 each coordinate ATP. The ATP-grasp 1 domain maps to 133–327 (KQLMEELEQP…IAKLAAKIAV (195 aa)). Gln-284, Glu-298, and Asn-300 together coordinate Mg(2+). Residues Gln-284, Glu-298, and Asn-300 each contribute to the Mn(2+) site. The oligomerization domain stretch occupies residues 402-546 (IGVHHNEIPE…YSTYGWENES (145 aa)). Positions 547 to 929 (IRSDKESVLV…ALYKAFEASY (383 aa)) are carbamoyl phosphate synthetic domain. The region spanning 671 to 861 (EQALKELDIP…MAQVATKLIL (191 aa)) is the ATP-grasp 2 domain. Residues Arg-707, Ser-746, Ile-748, Glu-752, Gly-777, Val-778, His-779, Ser-780, Gln-820, and Glu-832 each coordinate ATP. Positions 820, 832, and 834 each coordinate Mg(2+). Mn(2+) is bound by residues Gln-820, Glu-832, and Asn-834. The MGS-like domain maps to 930–1058 (LHLPTFGNVV…ESRSFVTEAI (129 aa)). Residues 930-1058 (LHLPTFGNVV…ESRSFVTEAI (129 aa)) form an allosteric domain region.

This sequence belongs to the CarB family. In terms of assembly, composed of two chains; the small (or glutamine) chain promotes the hydrolysis of glutamine to ammonia, which is used by the large (or ammonia) chain to synthesize carbamoyl phosphate. Tetramer of heterodimers (alpha,beta)4. Mg(2+) serves as cofactor. Mn(2+) is required as a cofactor.

It catalyses the reaction hydrogencarbonate + L-glutamine + 2 ATP + H2O = carbamoyl phosphate + L-glutamate + 2 ADP + phosphate + 2 H(+). It carries out the reaction hydrogencarbonate + NH4(+) + 2 ATP = carbamoyl phosphate + 2 ADP + phosphate + 2 H(+). The protein operates within amino-acid biosynthesis; L-arginine biosynthesis; carbamoyl phosphate from bicarbonate: step 1/1. It participates in pyrimidine metabolism; UMP biosynthesis via de novo pathway; (S)-dihydroorotate from bicarbonate: step 1/3. Large subunit of the glutamine-dependent carbamoyl phosphate synthetase (CPSase). CPSase catalyzes the formation of carbamoyl phosphate from the ammonia moiety of glutamine, carbonate, and phosphate donated by ATP, constituting the first step of 2 biosynthetic pathways, one leading to arginine and/or urea and the other to pyrimidine nucleotides. The large subunit (synthetase) binds the substrates ammonia (free or transferred from glutamine from the small subunit), hydrogencarbonate and ATP and carries out an ATP-coupled ligase reaction, activating hydrogencarbonate by forming carboxy phosphate which reacts with ammonia to form carbamoyl phosphate. The polypeptide is Carbamoyl phosphate synthase large chain (Streptococcus pneumoniae (strain ATCC BAA-255 / R6)).